The sequence spans 129 residues: Small ribosomal subunit protein uS8 (129 aa).

This sequence belongs to the universal ribosomal protein uS8 family. Part of the 30S ribosomal subunit. Contacts proteins S5 and S12.

Functionally, one of the primary rRNA binding proteins, it binds directly to 16S rRNA central domain where it helps coordinate assembly of the platform of the 30S subunit. The polypeptide is Small ribosomal subunit protein uS8 (Colwellia psychrerythraea (strain 34H / ATCC BAA-681) (Vibrio psychroerythus)).